The sequence spans 262 residues: Carbonic anhydrase 13 (262 aa).

The Alpha-carbonic anhydrase domain maps to 4–261 (LSWGYREHNG…LKGRKVRASF (258 aa)). Catalysis depends on H65, which acts as the Proton donor/acceptor. Zn(2+) contacts are provided by H95, H97, and H120. Residue 200 to 201 (TV) coordinates substrate.

This sequence belongs to the alpha-carbonic anhydrase family. It depends on Zn(2+) as a cofactor. As to expression, expressed in thymus, small intestine, spleen, prostate, ovary, colon and testis.

It catalyses the reaction hydrogencarbonate + H(+) = CO2 + H2O. Its activity is regulated as follows. Inhibited by acetazolamide. Its function is as follows. Reversible hydration of carbon dioxide. The chain is Carbonic anhydrase 13 (CA13) from Homo sapiens (Human).